A 461-amino-acid polypeptide reads, in one-letter code: Secreted 45 kDa protein (461 aa).

The first 27 residues, 1–27, serve as a signal peptide directing secretion; the sequence is MKKKIISAILMSTVILSAAAPLSGVYA. Low complexity predominate over residues 264–329; sequence SSASASSSQA…GNTNSGTSTG (66 aa). Positions 264–343 are disordered; it reads SSASASSSQA…TTTGGSGINS (80 aa). Gly residues predominate over residues 330–340; sequence NTGGTTTGGSG. Positions 330–459 constitute a Peptidase C51 domain; the sequence is NTGGTTTGGS…VSASGVTFLM (130 aa).

The sequence is that of Secreted 45 kDa protein (usp45) from Lactococcus lactis subsp. cremoris (strain MG1363).